The following is a 306-amino-acid chain: MTTSLVLHPRWADTLMYVYEKSPNENNQNKSQTMEGLSGNCPATHCRDLMSHPALGRHSGTIATHQGSVYSDISSPDTGRQCPAPQTSSSASLSYGYPFGNPYYGCRLSHSHNVNLQQKPCSYHPAEKYAEPSSALPTEELSSRAKEFAFYPSFASSYQAVPGYLDVSVMPSISGHPEPRHDALIPMEGYQHWALSNGWDGQVYCSKEQTQSTHLWKSPFPDVVPLQPEVSSYRRGRKKRVPYTKLQLKELEKEYAASKFITKDKRRRISAATNLSERQVTIWFQNRRVKEKKFISKSKSSHMHTT.

Residues 68–90 form a disordered region; the sequence is SVYSDISSPDTGRQCPAPQTSSS. Residues 236–295 constitute a DNA-binding region (homeobox); that stretch reads GRKKRVPYTKLQLKELEKEYAASKFITKDKRRRISAATNLSERQVTIWFQNRRVKEKKFI.

The protein belongs to the Abd-B homeobox family.

Its subcellular location is the nucleus. In terms of biological role, sequence-specific transcription factor which is part of a developmental regulatory system that provides cells with specific positional identities on the anterior-posterior axis. This Takifugu rubripes (Japanese pufferfish) protein is Homeobox protein Hox-C13a (hoxc13a).